The sequence spans 331 residues: MTRMKNSSSNVTSASGSGSGSGGFVQPLPASLLQPICHPRVTEVTSEVNDYFLTHWDFPSEKLRKKFVAADFPGVTCLYFPNALDDRISFACRLLTVLFLIDDLLEFMSLEQGSAYNEKLIPISRGDVLPDRSVPVEYITYDLWESMRGHDRSMANEILEPVFVFMRAQTDRTRIRPMGLGSYLEYRERDVGKALLAALMRFSMALHVSPVELTILGEIDVNCSKHLSVINDVYSYEKELRASKTAHAEGGALCTSVRILADEMAISIEAAKRVLVFMCREWELRHQVLVEELRADGRQSASLTAYVKGLEFQMSGNEEWSKTTLRYNNVV.

The tract at residues 1-22 (MTRMKNSSSNVTSASGSGSGSG) is disordered. Positions 7-16 (SSSNVTSASG) are enriched in low complexity. Asp-102, Asn-231, Ser-235, and Glu-239 together coordinate Mg(2+). The DDxx(x)D/E motif signature appears at 102–106 (DDLLE). The NDxxSxxxD/E motif motif lies at 231-239 (NDVYSYEKE). The (2E,6E)-farnesyl diphosphate site is built by Arg-326 and Tyr-327.

Belongs to the terpene synthase family. Homodimer. Mg(2+) is required as a cofactor.

The catalysed reaction is (2E,6E)-farnesyl diphosphate = (+)-aristolochene + diphosphate. It functions in the pathway sesquiterpene biosynthesis; aristolochene biosynthesis; aristolochene from farnesyl diphosphate: step 1/1. Functionally, catalyzes the cyclization of trans,trans-farnesyl diphosphate (FPP) to the bicyclic sesquiterpene aristolochene. Aristolochene is the likely parent compound for a number of sesquiterpenoid toxins produced by filamentous fungi. The chain is (+)-aristolochene synthase TS1 from Penicillium expansum (Blue mold rot fungus).